The primary structure comprises 287 residues: Probable endonuclease LCL3 (287 aa).

A disordered region spans residues 1–40 (MPWPFGPSGSSEAPPPQKPRDDKVEGREPAKSWNSLLPKP). Residues 18-30 (KPRDDKVEGREPA) show a composition bias toward basic and acidic residues. A helical transmembrane segment spans residues 50-67 (WAPVFLTAVGSLAAFMFY). Residues 88–246 (RSLLGRVTSV…KAKKLGLWSI (159 aa)) enclose the TNase-like domain. The active site involves Arg137. A Ca(2+)-binding site is contributed by Asp142. Residues Glu145 and Arg185 contribute to the active site. Positions 254–272 (PRDFKNRTQGNEKSERDVE) are enriched in basic and acidic residues. A disordered region spans residues 254-278 (PRDFKNRTQGNEKSERDVEGSTVQK).

Belongs to the LCL3 family.

Its subcellular location is the mitochondrion. It localises to the membrane. This is Probable endonuclease LCL3 (LCL3) from Verticillium alfalfae (strain VaMs.102 / ATCC MYA-4576 / FGSC 10136) (Verticillium wilt of alfalfa).